Reading from the N-terminus, the 199-residue chain is Cytochrome c oxidase subunit 2 (199 aa).

The chain crosses the membrane as a helical span at residues 1 to 13; the sequence is AICSLVLYLLTLM. Over 14–26 the chain is Mitochondrial matrix; the sequence is LMEKLSSNTVDAQ. A helical membrane pass occupies residues 27 to 54; the sequence is EVELIWTILPAIVLILLALPSLQILYMM. The Mitochondrial intermembrane segment spans residues 55 to 199; it reads DEIDEPDLTL…SSLLSASSSL (145 aa). The Cu cation site is built by histidine 128, cysteine 163, glutamate 165, cysteine 167, histidine 171, and methionine 174. Residue glutamate 165 coordinates Mg(2+).

Belongs to the cytochrome c oxidase subunit 2 family. In terms of assembly, component of the cytochrome c oxidase (complex IV, CIV), a multisubunit enzyme composed of 14 subunits. The complex is composed of a catalytic core of 3 subunits MT-CO1, MT-CO2 and MT-CO3, encoded in the mitochondrial DNA, and 11 supernumerary subunits COX4I, COX5A, COX5B, COX6A, COX6B, COX6C, COX7A, COX7B, COX7C, COX8 and NDUFA4, which are encoded in the nuclear genome. The complex exists as a monomer or a dimer and forms supercomplexes (SCs) in the inner mitochondrial membrane with NADH-ubiquinone oxidoreductase (complex I, CI) and ubiquinol-cytochrome c oxidoreductase (cytochrome b-c1 complex, complex III, CIII), resulting in different assemblies (supercomplex SCI(1)III(2)IV(1) and megacomplex MCI(2)III(2)IV(2)). Found in a complex with TMEM177, COA6, COX18, COX20, SCO1 and SCO2. Interacts with TMEM177 in a COX20-dependent manner. Interacts with COX20. Interacts with COX16. The cofactor is Cu cation.

Its subcellular location is the mitochondrion inner membrane. The catalysed reaction is 4 Fe(II)-[cytochrome c] + O2 + 8 H(+)(in) = 4 Fe(III)-[cytochrome c] + 2 H2O + 4 H(+)(out). Its function is as follows. Component of the cytochrome c oxidase, the last enzyme in the mitochondrial electron transport chain which drives oxidative phosphorylation. The respiratory chain contains 3 multisubunit complexes succinate dehydrogenase (complex II, CII), ubiquinol-cytochrome c oxidoreductase (cytochrome b-c1 complex, complex III, CIII) and cytochrome c oxidase (complex IV, CIV), that cooperate to transfer electrons derived from NADH and succinate to molecular oxygen, creating an electrochemical gradient over the inner membrane that drives transmembrane transport and the ATP synthase. Cytochrome c oxidase is the component of the respiratory chain that catalyzes the reduction of oxygen to water. Electrons originating from reduced cytochrome c in the intermembrane space (IMS) are transferred via the dinuclear copper A center (CU(A)) of subunit 2 and heme A of subunit 1 to the active site in subunit 1, a binuclear center (BNC) formed by heme A3 and copper B (CU(B)). The BNC reduces molecular oxygen to 2 water molecules using 4 electrons from cytochrome c in the IMS and 4 protons from the mitochondrial matrix. In Dromaius novaehollandiae (Emu), this protein is Cytochrome c oxidase subunit 2 (MT-CO2).